Reading from the N-terminus, the 323-residue chain is Transaldolase (323 aa).

Lys-131 functions as the Schiff-base intermediate with substrate in the catalytic mechanism.

Belongs to the transaldolase family. Type 1 subfamily. Homodimer.

Its subcellular location is the cytoplasm. It carries out the reaction D-sedoheptulose 7-phosphate + D-glyceraldehyde 3-phosphate = D-erythrose 4-phosphate + beta-D-fructose 6-phosphate. Its pathway is carbohydrate degradation; pentose phosphate pathway; D-glyceraldehyde 3-phosphate and beta-D-fructose 6-phosphate from D-ribose 5-phosphate and D-xylulose 5-phosphate (non-oxidative stage): step 2/3. Functionally, transaldolase is important for the balance of metabolites in the pentose-phosphate pathway. This is Transaldolase from Blochmanniella floridana.